A 943-amino-acid polypeptide reads, in one-letter code: Glycine dehydrogenase (decarboxylating) (943 aa).

An N6-(pyridoxal phosphate)lysine modification is found at K695.

This sequence belongs to the GcvP family. As to quaternary structure, the glycine cleavage system is composed of four proteins: P, T, L and H. Requires pyridoxal 5'-phosphate as cofactor.

The enzyme catalyses N(6)-[(R)-lipoyl]-L-lysyl-[glycine-cleavage complex H protein] + glycine + H(+) = N(6)-[(R)-S(8)-aminomethyldihydrolipoyl]-L-lysyl-[glycine-cleavage complex H protein] + CO2. In terms of biological role, the glycine cleavage system catalyzes the degradation of glycine. The P protein binds the alpha-amino group of glycine through its pyridoxal phosphate cofactor; CO(2) is released and the remaining methylamine moiety is then transferred to the lipoamide cofactor of the H protein. The chain is Glycine dehydrogenase (decarboxylating) from Jannaschia sp. (strain CCS1).